A 433-amino-acid polypeptide reads, in one-letter code: MTCDKEKTRGIRPGDIAVVVGTGRSGVAAARLLHAKGARVRVLERDAANVPATFAEWAAGAGVEIVCGAHDAAHFADAAVVVPSPGVAVATLRPYLPATGGPEVMAEMELAWRELSGEPVIAVTGTSGKTTTVSLCAHMLRTQGLSVFLGGNIGTPLCEYVLEGKRADVLVIEISSFQLQTCSTFRPRVAMLLNITANHLDYHADMQEYIDAKFRLFRCQDEDDLAVFGEGLAPLVDRYGVKARRVTFRATDRFAESRLFGAHNRANAEAAWTAAREFGVTLENALQAVATFAPMPHRLEQVAERGGVLYVNDSKCTTVSALRVALEAFDRPVLLLAGGKFKGGDLEGLIPLVRERVRAVMLFGASREVFEAAWRDVVPMTWDATLEEAVRRAASAARQGEVVLMAPATASFDLFRNYGHRGDVFRAAVESLA.

An ATP-binding site is contributed by 125-131; it reads GTSGKTT.

It belongs to the MurCDEF family.

It is found in the cytoplasm. It carries out the reaction UDP-N-acetyl-alpha-D-muramoyl-L-alanine + D-glutamate + ATP = UDP-N-acetyl-alpha-D-muramoyl-L-alanyl-D-glutamate + ADP + phosphate + H(+). It functions in the pathway cell wall biogenesis; peptidoglycan biosynthesis. Functionally, cell wall formation. Catalyzes the addition of glutamate to the nucleotide precursor UDP-N-acetylmuramoyl-L-alanine (UMA). This chain is UDP-N-acetylmuramoylalanine--D-glutamate ligase, found in Nitratidesulfovibrio vulgaris (strain ATCC 29579 / DSM 644 / CCUG 34227 / NCIMB 8303 / VKM B-1760 / Hildenborough) (Desulfovibrio vulgaris).